A 95-amino-acid polypeptide reads, in one-letter code: Aspartyl/glutamyl-tRNA(Asn/Gln) amidotransferase subunit C (95 aa).

The protein belongs to the GatC family. Heterotrimer of A, B and C subunits.

It carries out the reaction L-glutamyl-tRNA(Gln) + L-glutamine + ATP + H2O = L-glutaminyl-tRNA(Gln) + L-glutamate + ADP + phosphate + H(+). The catalysed reaction is L-aspartyl-tRNA(Asn) + L-glutamine + ATP + H2O = L-asparaginyl-tRNA(Asn) + L-glutamate + ADP + phosphate + 2 H(+). In terms of biological role, allows the formation of correctly charged Asn-tRNA(Asn) or Gln-tRNA(Gln) through the transamidation of misacylated Asp-tRNA(Asn) or Glu-tRNA(Gln) in organisms which lack either or both of asparaginyl-tRNA or glutaminyl-tRNA synthetases. The reaction takes place in the presence of glutamine and ATP through an activated phospho-Asp-tRNA(Asn) or phospho-Glu-tRNA(Gln). The chain is Aspartyl/glutamyl-tRNA(Asn/Gln) amidotransferase subunit C from Methylobacillus flagellatus (strain ATCC 51484 / DSM 6875 / VKM B-1610 / KT).